The following is a 540-amino-acid chain: Peptide chain release factor 3 (540 aa).

One can recognise a tr-type G domain in the interval 14-283 (NQRRNFAIIS…AFLDYALKPI (270 aa)). GTP contacts are provided by residues 23–30 (SHPDAGKT), 91–95 (DTPGH), and 145–148 (NKLD).

This sequence belongs to the TRAFAC class translation factor GTPase superfamily. Classic translation factor GTPase family. PrfC subfamily.

The protein resides in the cytoplasm. In terms of biological role, increases the formation of ribosomal termination complexes and stimulates activities of RF-1 and RF-2. It binds guanine nucleotides and has strong preference for UGA stop codons. It may interact directly with the ribosome. The stimulation of RF-1 and RF-2 is significantly reduced by GTP and GDP, but not by GMP. This is Peptide chain release factor 3 from Gloeothece citriformis (strain PCC 7424) (Cyanothece sp. (strain PCC 7424)).